A 179-amino-acid polypeptide reads, in one-letter code: MLKPSDTWSWYYDNKAQSLMLDLGMDMVFCVNLSPKVLINSAFDDCKFSVDDASAYQMFVEHISYLPLSEPRKVELALNCVAARRFHKPMLPKSWFFETQGAGYYPEEGEIVSLKNDLGEGHFIIVENYECASMCMLVDMDAFALNPTKYMAFCEPIKVMNDRMAKMQVVNSSYYALVG.

The protein belongs to the ZapC family. Interacts directly with FtsZ.

Its subcellular location is the cytoplasm. Contributes to the efficiency of the cell division process by stabilizing the polymeric form of the cell division protein FtsZ. Acts by promoting interactions between FtsZ protofilaments and suppressing the GTPase activity of FtsZ. This is Cell division protein ZapC from Aliivibrio salmonicida (strain LFI1238) (Vibrio salmonicida (strain LFI1238)).